The sequence spans 198 residues: Nucleoid occlusion factor SlmA (198 aa).

One can recognise an HTH tetR-type domain in the interval 9–70; that stretch reads RNRREEILQA…SLIEFIEDSL (62 aa). The segment at residues 33-52 is a DNA-binding region (H-T-H motif); sequence TTAKLAANVGVSEAALYRHF. The stretch at 117–144 forms a coiled coil; sequence EQDRLQGRINQLFERIEAQLRQVLKERK.

Belongs to the nucleoid occlusion factor SlmA family. As to quaternary structure, homodimer. Interacts with FtsZ.

It is found in the cytoplasm. The protein localises to the nucleoid. Its function is as follows. Required for nucleoid occlusion (NO) phenomenon, which prevents Z-ring formation and cell division over the nucleoid. Acts as a DNA-associated cell division inhibitor that binds simultaneously chromosomal DNA and FtsZ, and disrupts the assembly of FtsZ polymers. SlmA-DNA-binding sequences (SBS) are dispersed on non-Ter regions of the chromosome, preventing FtsZ polymerization at these regions. In Serratia proteamaculans (strain 568), this protein is Nucleoid occlusion factor SlmA.